We begin with the raw amino-acid sequence, 252 residues long: 3-dehydroquinate dehydratase (252 aa).

3-dehydroquinate-binding positions include S21, 46 to 48 (EWR), and R82. H143 (proton donor/acceptor) is an active-site residue. K170 (schiff-base intermediate with substrate) is an active-site residue. 3-dehydroquinate is bound by residues R213, S232, and Q236.

Belongs to the type-I 3-dehydroquinase family. In terms of assembly, homodimer.

It carries out the reaction 3-dehydroquinate = 3-dehydroshikimate + H2O. It functions in the pathway metabolic intermediate biosynthesis; chorismate biosynthesis; chorismate from D-erythrose 4-phosphate and phosphoenolpyruvate: step 3/7. Involved in the third step of the chorismate pathway, which leads to the biosynthesis of aromatic amino acids. Catalyzes the cis-dehydration of 3-dehydroquinate (DHQ) and introduces the first double bond of the aromatic ring to yield 3-dehydroshikimate. This chain is 3-dehydroquinate dehydratase, found in Escherichia coli O157:H7.